A 130-amino-acid polypeptide reads, in one-letter code: MINRKVVYALSALLLFVYSYAFISDFSEFKNFLNIQYLKFKEFLFLLNNAEEKRRGTLNEDVLRQLTENLELVSIRYEYGKYEVKLRKVNAVELVSLLKELENYGKVEKLEAVDNTGRGIFDVKFIVSPL.

An N-terminal signal peptide occupies residues 1-23 (MINRKVVYALSALLLFVYSYAFI).

This is an uncharacterized protein from Aquifex aeolicus (strain VF5).